The following is a 99-amino-acid chain: Protein SPIRAL1-like 5 (99 aa).

Residues 1 to 12 (MSRGGSFGGGQS) are compositionally biased toward gly residues. The interval 1–99 (MSRGGSFGGG…SSLGYLFGDK (99 aa)) is disordered. Residues 27-39 (TPAPPVAPKPAPP) are compositionally biased toward pro residues. Polar residues predominate over residues 56–73 (KISNNNYQRVQGQNSGNF). Serine 58 is modified (phosphoserine).

It belongs to the SPIRAL1 family. As to expression, expressed exclusively in stems and flowers.

Its function is as follows. Acts redundantly with SPR1 in maintaining the cortical microtubules organization essential for anisotropic cell growth. The sequence is that of Protein SPIRAL1-like 5 (SP1L5) from Arabidopsis thaliana (Mouse-ear cress).